Consider the following 463-residue polypeptide: MHLHFTPRQIVEKLDQYIIGQKDAKKAVAVALRNRYRRSKLAENLRDEIAPKNILMIGPTGVGKTEVARRMAKLVGAPFIKVEATKFTEVGYVGRDVESMVRDLVETSVRIVKEEMVVKVQDKAEEQANQRLVEILVPSPEKQSGFKNPLEMLFGGTQNSNQTTDSQEDVEIEKKRQDVERKLAAGLLEDEIVSIEVTEQQSSMFDMLQGTGMEQMGMNFQDALGSFMPKKTKKRKLSVKEARKVLTNEEAQRLIDMDEVTQEAVYRAEQLGIIFIDEIDKIAGKQSNSVDVSREGVQRDILPIVEGSNVATKYGSVKTDYILFVAAGAFHMSKPSDLIPELQGRFPIRVELTKLSTDDFVKILIEPDNALIKQYMALLATEGIEIEFSDEAIRKIAEIAYQVNQDTDNIGARRLHTIMEKLLEDLSFEASEITLEKITITPQYVEEKLATIAKNKDVSQFIL.

Residues I19, G61–E66, D277, E341, and R413 each bind ATP.

Belongs to the ClpX chaperone family. HslU subfamily. A double ring-shaped homohexamer of HslV is capped on each side by a ring-shaped HslU homohexamer. The assembly of the HslU/HslV complex is dependent on binding of ATP.

The protein resides in the cytoplasm. ATPase subunit of a proteasome-like degradation complex; this subunit has chaperone activity. The binding of ATP and its subsequent hydrolysis by HslU are essential for unfolding of protein substrates subsequently hydrolyzed by HslV. HslU recognizes the N-terminal part of its protein substrates and unfolds these before they are guided to HslV for hydrolysis. The protein is ATP-dependent protease ATPase subunit HslU of Bacillus anthracis (strain A0248).